Here is a 910-residue protein sequence, read N- to C-terminus: Valine--tRNA ligase (910 aa).

The short motif at 46 to 56 (PNVTGSLHMGH) is the 'HIGH' region element. Residues 539–543 (KMSKS) carry the 'KMSKS' region motif. Lys542 is an ATP binding site. Residues 845–909 (DLDILRNKIQ…QMLQERLKML (65 aa)) adopt a coiled-coil conformation.

Belongs to the class-I aminoacyl-tRNA synthetase family. ValS type 1 subfamily. Monomer.

The protein resides in the cytoplasm. The enzyme catalyses tRNA(Val) + L-valine + ATP = L-valyl-tRNA(Val) + AMP + diphosphate. Catalyzes the attachment of valine to tRNA(Val). As ValRS can inadvertently accommodate and process structurally similar amino acids such as threonine, to avoid such errors, it has a 'posttransfer' editing activity that hydrolyzes mischarged Thr-tRNA(Val) in a tRNA-dependent manner. The chain is Valine--tRNA ligase from Synechocystis sp. (strain ATCC 27184 / PCC 6803 / Kazusa).